Here is a 267-residue protein sequence, read N- to C-terminus: Corrinoid adenosyltransferase EutT (267 aa).

The a divalent metal cation site is built by Cys-80 and Cys-83.

Belongs to the Cob(I)alamin adenosyltransferase family. EutT subfamily. Homodimer. A divalent metal cation serves as cofactor.

It localises to the bacterial microcompartment. It catalyses the reaction 2 cob(II)alamin + reduced [electron-transfer flavoprotein] + 2 ATP + 2 H2O = 2 adenosylcob(III)alamin + oxidized [electron-transfer flavoprotein] + 2 phosphate + 2 diphosphate + 3 H(+). It carries out the reaction 2 cob(II)inamide + reduced [electron-transfer flavoprotein] + 2 ATP + 2 H2O = 2 adenosylcob(III)inamide + oxidized [electron-transfer flavoprotein] + 2 phosphate + 2 diphosphate + 3 H(+). It participates in amine and polyamine degradation; ethanolamine degradation. Functionally, converts cyanocobalamin (CN-B12) to adenosylcobalamin (AdoCbl), the inducer of the eut operon. Is not active on cobinamide nor other intermediates in the adenosylcobalamin synthetic pathway. Allows full induction of the eut operon. This chain is Corrinoid adenosyltransferase EutT (eutT), found in Escherichia coli O6:H1 (strain CFT073 / ATCC 700928 / UPEC).